We begin with the raw amino-acid sequence, 611 residues long: MAU2 chromatid cohesion factor homolog (611 aa).

TPR repeat units lie at residues 11 to 46, 91 to 124, 131 to 164, 371 to 404, and 490 to 523; these read YAGL…NPPP, FEAS…TSGE, FRLF…AEQC, PILH…ADNP, and ACSL…SGKI. The tract at residues 581-611 is disordered; sequence WTGAVSPTKSSTIPPQQSFQTWSQPGPSRLS. Residues 585–611 are compositionally biased toward polar residues; that stretch reads VSPTKSSTIPPQQSFQTWSQPGPSRLS.

Belongs to the SCC4/mau-2 family. In terms of assembly, component of the cohesin loading complex.

It is found in the nucleus. The protein resides in the nucleoplasm. In terms of biological role, required for association of the cohesin complex with chromatin during interphase. Plays a role in sister chromatid cohesion and normal progression through prometaphase. The sequence is that of MAU2 chromatid cohesion factor homolog from Nematostella vectensis (Starlet sea anemone).